A 523-amino-acid chain; its full sequence is 2,3-bisphosphoglycerate-independent phosphoglycerate mutase (523 aa).

The Mn(2+) site is built by D13 and S63. S63 serves as the catalytic Phosphoserine intermediate. Substrate contacts are provided by residues H124, R156–D157, R188, R194, R268–R271, and K341. Residues D408, H412, D449, H450, and H467 each contribute to the Mn(2+) site.

The protein belongs to the BPG-independent phosphoglycerate mutase family. As to quaternary structure, monomer. Mn(2+) is required as a cofactor.

It catalyses the reaction (2R)-2-phosphoglycerate = (2R)-3-phosphoglycerate. It functions in the pathway carbohydrate degradation; glycolysis; pyruvate from D-glyceraldehyde 3-phosphate: step 3/5. Functionally, catalyzes the interconversion of 2-phosphoglycerate and 3-phosphoglycerate. The protein is 2,3-bisphosphoglycerate-independent phosphoglycerate mutase of Salinibacter ruber (strain DSM 13855 / M31).